The sequence spans 855 residues: Valine--tRNA ligase (855 aa).

Positions 44 to 54 (PNVTGVLHIGH) match the 'HIGH' region motif. The 'KMSKS' region motif lies at 524-528 (KMSKT). Residue K527 coordinates ATP. Residues 797-827 (KVEEDPARKQKEREQLEKNIANSKRQLGDEV) adopt a coiled-coil conformation.

This sequence belongs to the class-I aminoacyl-tRNA synthetase family. ValS type 1 subfamily. In terms of assembly, monomer.

It localises to the cytoplasm. It catalyses the reaction tRNA(Val) + L-valine + ATP = L-valyl-tRNA(Val) + AMP + diphosphate. In terms of biological role, catalyzes the attachment of valine to tRNA(Val). As ValRS can inadvertently accommodate and process structurally similar amino acids such as threonine, to avoid such errors, it has a 'posttransfer' editing activity that hydrolyzes mischarged Thr-tRNA(Val) in a tRNA-dependent manner. The polypeptide is Valine--tRNA ligase (Solibacter usitatus (strain Ellin6076)).